A 416-amino-acid chain; its full sequence is RNA-editing ligase 2, mitochondrial (416 aa).

Residues 1–17 (MLRRLGVRHFRRTPLLF) constitute a mitochondrion transit peptide. ATP is bound by residues 29–31 (TEI), 56–62 (EKVHGAN), Arg79, Glu126, Phe173, and 269–271 (KFK). The active-site N6-AMP-lysine intermediate is the Lys57.

This sequence belongs to the RNA ligase 2 family. In terms of assembly, component of the RNA editing complex, a 1600 kDa complex composed of at least 20 proteins.

The protein localises to the mitochondrion. The catalysed reaction is ATP + (ribonucleotide)n-3'-hydroxyl + 5'-phospho-(ribonucleotide)m = (ribonucleotide)n+m + AMP + diphosphate.. RNA editing in kinetoplastid mitochondria inserts and deletes uridylates at multiple sites in pre-mRNAs as directed by guide RNAs. The protein is RNA-editing ligase 2, mitochondrial (REL2) of Trypanosoma brucei brucei (strain 927/4 GUTat10.1).